Consider the following 882-residue polypeptide: DNA mismatch repair protein MutS (882 aa).

627 to 634 is an ATP binding site; sequence GPNMAGKS.

Belongs to the DNA mismatch repair MutS family.

Functionally, this protein is involved in the repair of mismatches in DNA. It is possible that it carries out the mismatch recognition step. This protein has a weak ATPase activity. This Anaeromyxobacter sp. (strain K) protein is DNA mismatch repair protein MutS.